Consider the following 512-residue polypeptide: Acid-sensing ion channel 2 (512 aa).

Topologically, residues 1–37 (MDLKESPSEGSLQPSSIQIFANTSTLHGIRHIFVYGP) are cytoplasmic. Phosphoserine is present on residues Ser-8 and Ser-11. The chain crosses the membrane as a helical span at residues 38-58 (LTIRRVLWAVAFVGSLGLLLV). Over 59-427 (ESSERVSYYF…EQKKAYEVAA (369 aa)) the chain is Extracellular. Cystine bridges form between Cys-92-Cys-193, Cys-289-Cys-364, Cys-307-Cys-360, Cys-311-Cys-358, Cys-320-Cys-342, and Cys-322-Cys-334. 2 N-linked (GlcNAc...) asparagine glycosylation sites follow: Asn-365 and Asn-392. The helical transmembrane segment at 428–448 (LLGDIGGQMGLFIGASILTIL) threads the bilayer. The short motif at 441–443 (GAS) is the GAS motif; ion selectivity filter element. Residues 449–512 (ELFDYIYELI…ALGTLEEIAC (64 aa)) lie on the Cytoplasmic side of the membrane.

This sequence belongs to the amiloride-sensitive sodium channel (TC 1.A.6) family. ASIC2 subfamily. Can form homotrimers. Heterotrimer; forms functional heterotrimers producing channel with different properties. Forms heterotrimers with ASIC1; while ASIC1 determines current amplitude, ASIC2 influences the properties of the current. Forms heterotrimers with ASIC3; resulting in channels with distinct properties. Interacts with STOM; STOM regulates the gating of ASIC2-containing channels. Interacts with PICK1; promotes ASIC3 phosphorylation by PKC and activation of ASIC2/ASIC3 heterotrimers. As to expression, expressed by sensory neurons. Expressed by nociceptive sensory neurons, spiral ganglion (SG) neurons and the retina (at protein level). Expressed in outer nuclear layer of retina (photoreceptors) and to a lower extent in distal and proximal inner nuclear layer.

The protein localises to the cell membrane. It catalyses the reaction Na(+)(in) = Na(+)(out). It carries out the reaction K(+)(in) = K(+)(out). The enzyme catalyses Li(+)(in) = Li(+)(out). Its activity is regulated as follows. Inhibited by the diuretic drug amiloride. In terms of biological role, forms pH-gated trimeric sodium channels that act as postsynaptic excitatory sensors in the nervous system. Upon extracellular acidification, these channels generate rapid, transient inward currents that fully desensitize. Highly selective for sodium, they are permeable to other cations. By forming heterotrimeric channels with ASIC1, could contribute to synaptic plasticity, learning, and memory. Additionally, as acid sensors at nerve terminals, plays a role in mechanosensation and phototransduction. Functionally, has no pH-gated sodium channel activity per se but can associate with other ASICs to produce functional channels with specific properties. This Mus musculus (Mouse) protein is Acid-sensing ion channel 2.